Reading from the N-terminus, the 100-residue chain is Sec-independent protein translocase protein TatA (100 aa).

A helical membrane pass occupies residues 1–21; the sequence is MGALKPWHIAVLVVVLILLFG. Residues 44 to 55 show a composition bias toward basic and acidic residues; it reads KSLHDDDRDLAE. The disordered stretch occupies residues 44 to 100; the sequence is KSLHDDDRDLAEKANAQAGYQPLPPQVQQEPYPQQTPYQAPPQQQPVVDPVQRARDS. Residues 69-81 are compositionally biased toward low complexity; that stretch reads QVQQEPYPQQTPY.

It belongs to the TatA/E family. In terms of assembly, the Tat system comprises two distinct complexes: a TatABC complex, containing multiple copies of TatA, TatB and TatC subunits, and a separate TatA complex, containing only TatA subunits. Substrates initially bind to the TatABC complex, which probably triggers association of the separate TatA complex to form the active translocon.

Its subcellular location is the cell membrane. In terms of biological role, part of the twin-arginine translocation (Tat) system that transports large folded proteins containing a characteristic twin-arginine motif in their signal peptide across membranes. TatA could form the protein-conducting channel of the Tat system. This is Sec-independent protein translocase protein TatA from Salinispora arenicola (strain CNS-205).